A 187-amino-acid chain; its full sequence is Large ribosomal subunit protein uL5 (187 aa).

This sequence belongs to the universal ribosomal protein uL5 family. As to quaternary structure, part of the 50S ribosomal subunit; part of the 5S rRNA/L5/L18/L25 subcomplex. Contacts the 5S rRNA and the P site tRNA. Forms a bridge to the 30S subunit in the 70S ribosome.

Functionally, this is one of the proteins that bind and probably mediate the attachment of the 5S RNA into the large ribosomal subunit, where it forms part of the central protuberance. In the 70S ribosome it contacts protein S13 of the 30S subunit (bridge B1b), connecting the 2 subunits; this bridge is implicated in subunit movement. Contacts the P site tRNA; the 5S rRNA and some of its associated proteins might help stabilize positioning of ribosome-bound tRNAs. This is Large ribosomal subunit protein uL5 from Mycobacterium avium (strain 104).